A 126-amino-acid polypeptide reads, in one-letter code: MRHYEVVFIVHPDQSEQVPAMVERYQALVTGQSGTVHRLEDWGRRQLAYPIQKLVKAHYVCMNIECGQATLDELEHSFRYNDAVLRHLVIKTKKAPAAPSIMMKSVEREEARKASAEAAATATAAE.

This sequence belongs to the bacterial ribosomal protein bS6 family.

Its function is as follows. Binds together with bS18 to 16S ribosomal RNA. The sequence is that of Small ribosomal subunit protein bS6 from Bordetella bronchiseptica (strain ATCC BAA-588 / NCTC 13252 / RB50) (Alcaligenes bronchisepticus).